A 66-amino-acid polypeptide reads, in one-letter code: Conotoxin TsMEKL-03 (66 aa).

The first 9 residues, 1 to 9 (VILLMSTQA), serve as a signal peptide directing secretion. The propeptide occupies 10–38 (LIQSGVEKRSNKIKALSKRKTTAESWWEG). Disulfide bonds link cysteine 40/cysteine 54, cysteine 47/cysteine 58, and cysteine 53/cysteine 63.

Belongs to the conotoxin O2 superfamily. In terms of tissue distribution, expressed by the venom duct.

It localises to the secreted. In Conus tessulatus (Tessellate cone), this protein is Conotoxin TsMEKL-03.